Reading from the N-terminus, the 282-residue chain is Bifunctional protein FolD (282 aa).

NADP(+) contacts are provided by residues 160–162 (NRS), S185, and I228.

It belongs to the tetrahydrofolate dehydrogenase/cyclohydrolase family. In terms of assembly, homodimer.

It catalyses the reaction (6R)-5,10-methylene-5,6,7,8-tetrahydrofolate + NADP(+) = (6R)-5,10-methenyltetrahydrofolate + NADPH. The catalysed reaction is (6R)-5,10-methenyltetrahydrofolate + H2O = (6R)-10-formyltetrahydrofolate + H(+). It participates in one-carbon metabolism; tetrahydrofolate interconversion. Its function is as follows. Catalyzes the oxidation of 5,10-methylenetetrahydrofolate to 5,10-methenyltetrahydrofolate and then the hydrolysis of 5,10-methenyltetrahydrofolate to 10-formyltetrahydrofolate. This chain is Bifunctional protein FolD, found in Cenarchaeum symbiosum (strain A).